The sequence spans 187 residues: Peptidoglycan-recognition protein 2 (187 aa).

An N-terminal signal peptide occupies residues 1–19; the sequence is MKAFLVALVVAIELTLVFA. Disulfide bonds link Cys21–Cys144 and Cys58–Cys64. The N-acetylmuramoyl-L-alanine amidase domain occupies 43-170; the sequence is KPLKYVIIHH…RTVRPTDSPG (128 aa).

It belongs to the N-acetylmuramoyl-L-alanine amidase 2 family. Localizes to plasma (at protein level).

It localises to the secreted. Its function is as follows. Peptidoglycan-recognition protein probably involved in innate immunity by binding to peptidoglycans (PGN) of bacteria and activating the prophenoloxidase (proPO) cascade immune response. Binds to 1,3-beta-D-glucan and PGN. This is Peptidoglycan-recognition protein 2 (PGRP-2) from Holotrichia diomphalia (Korean black chafer).